Consider the following 331-residue polypeptide: Pectinesterase (331 aa).

Positions 1–17 (MVKSILASVLFAATALA) are cleaved as a signal peptide. Substrate is bound at residue Gln-138. The active-site Proton donor is the Asp-161. Residue Asp-182 is the Nucleophile of the active site. Substrate-binding residues include Arg-247 and Trp-249.

Belongs to the pectinesterase family.

Its subcellular location is the secreted. It carries out the reaction [(1-&gt;4)-alpha-D-galacturonosyl methyl ester](n) + n H2O = [(1-&gt;4)-alpha-D-galacturonosyl](n) + n methanol + n H(+). The protein operates within glycan metabolism; pectin degradation; 2-dehydro-3-deoxy-D-gluconate from pectin: step 1/5. Involved in maceration and soft-rotting of plant tissue. The protein is Pectinesterase (pme1) of Aspergillus niger.